The sequence spans 88 residues: Large ribosomal subunit protein bL27 (88 aa).

The span at 1–13 (MATKKGASSSSNG) shows a compositional bias: polar residues. Residues 1–25 (MATKKGASSSSNGRDSEAKRLGVKR) are disordered.

This sequence belongs to the bacterial ribosomal protein bL27 family.

This is Large ribosomal subunit protein bL27 from Corynebacterium efficiens (strain DSM 44549 / YS-314 / AJ 12310 / JCM 11189 / NBRC 100395).